We begin with the raw amino-acid sequence, 121 residues long: 18 kDa learning-associated protein of slug (121 aa).

Disordered regions lie at residues 44–67 (TMKT…GSME) and 95–121 (AVKK…AIKW). The segment covering 45 to 64 (MKTTEPIQENKTSEGTSTDG) has biased composition (polar residues).

This sequence belongs to the learning-associated protein family. In terms of tissue distribution, expressed predominantly in cerebral ganglia (at protein level). The mRNA is highly expressed in cerebral ganglia, and is detected at lower levels in visceral-pedal ganglia, head, and body, but is not detected in the tail.

It is found in the cytoplasm. Its subcellular location is the secreted. May be involved in modulating long-term memory formation and retention, at least with respect to odor-taste associative learning. This Lehmannia marginata (Tree slug) protein is 18 kDa learning-associated protein of slug.